Here is a 623-residue protein sequence, read N- to C-terminus: Translation initiation factor IF-2 (623 aa).

A compositionally biased stretch (low complexity) spans 1 to 18 (MTLNKKTNNENSSKTTPK). 2 disordered regions span residues 1–21 (MTLN…KLSK) and 92–115 (PQKE…KLQA). The tr-type G domain occupies 125-293 (KTPPIVTIMG…ILLFSEIQNL (169 aa)). The tract at residues 134–141 (GHVDHGKT) is G1. 134–141 (GHVDHGKT) provides a ligand contact to GTP. The segment at 159 to 163 (GITQH) is G2. The interval 180-183 (DTPG) is G3. GTP contacts are provided by residues 180 to 184 (DTPGH) and 234 to 237 (NKVD). The segment at 234–237 (NKVD) is G4. The G5 stretch occupies residues 270 to 272 (SAL).

Belongs to the TRAFAC class translation factor GTPase superfamily. Classic translation factor GTPase family. IF-2 subfamily.

It localises to the cytoplasm. In terms of biological role, one of the essential components for the initiation of protein synthesis. Protects formylmethionyl-tRNA from spontaneous hydrolysis and promotes its binding to the 30S ribosomal subunits. Also involved in the hydrolysis of GTP during the formation of the 70S ribosomal complex. The polypeptide is Translation initiation factor IF-2 (Aster yellows witches'-broom phytoplasma (strain AYWB)).